A 345-amino-acid polypeptide reads, in one-letter code: MTDNKALKILQEFLDISEPTLEQAIEVFTPLTVGEYDDIHIAALLTHIRTRGETFADVAGAARAFLNAGHPFPITGKGLMDTAGTGGDGANTINVTTGASLVASAGGVKMVKHGNRSVSSKSGSADVLEALGIPLNLDPDRAVRQLEASNFTFLFAPAYNPAVAHVQPVRKGLGISTLFNTMGPLLSPGRPEFQIMGIANPEQGQLIAEVFKDLGRTRALVVHGAGTDEIAVHGTTQVWELRDGTISHYELTPEDLGISHHELADLAGGNGEENAKALRAVFAGTGEPAHHDAIAATAGAMFYLNGTTDSIHEGVTHADQLIKNGTVAAWLKKHEEANYGSADRA.

5-phospho-alpha-D-ribose 1-diphosphate-binding positions include glycine 84, 87–88 (GD), threonine 92, 94–97 (NVTT), 112–120 (KHGNRSVSS), and serine 124. Glycine 84 lines the anthranilate pocket. Threonine 96 serves as a coordination point for Mg(2+). Asparagine 115 provides a ligand contact to anthranilate. Residue arginine 170 coordinates anthranilate. Residues aspartate 228 and glutamate 229 each coordinate Mg(2+).

This sequence belongs to the anthranilate phosphoribosyltransferase family. As to quaternary structure, homodimer. Requires Mg(2+) as cofactor.

The catalysed reaction is N-(5-phospho-beta-D-ribosyl)anthranilate + diphosphate = 5-phospho-alpha-D-ribose 1-diphosphate + anthranilate. Its pathway is amino-acid biosynthesis; L-tryptophan biosynthesis; L-tryptophan from chorismate: step 2/5. Catalyzes the transfer of the phosphoribosyl group of 5-phosphorylribose-1-pyrophosphate (PRPP) to anthranilate to yield N-(5'-phosphoribosyl)-anthranilate (PRA). In Corynebacterium aurimucosum (strain ATCC 700975 / DSM 44827 / CIP 107346 / CN-1) (Corynebacterium nigricans), this protein is Anthranilate phosphoribosyltransferase.